The sequence spans 215 residues: Urease accessory protein UreG (215 aa).

GTP is bound at residue 11–18 (GPVGAGKS).

This sequence belongs to the SIMIBI class G3E GTPase family. UreG subfamily. As to quaternary structure, homodimer. UreD, UreF and UreG form a complex that acts as a GTP-hydrolysis-dependent molecular chaperone, activating the urease apoprotein by helping to assemble the nickel containing metallocenter of UreC. The UreE protein probably delivers the nickel.

Its subcellular location is the cytoplasm. In terms of biological role, facilitates the functional incorporation of the urease nickel metallocenter. This process requires GTP hydrolysis, probably effectuated by UreG. The chain is Urease accessory protein UreG from Cenarchaeum symbiosum (strain A).